The primary structure comprises 291 residues: 4-diphosphocytidyl-2-C-methyl-D-erythritol kinase (291 aa).

Lysine 10 is an active-site residue. 94–104 (PVSAGLAGGSS) lines the ATP pocket. Residue aspartate 136 is part of the active site.

Belongs to the GHMP kinase family. IspE subfamily.

The catalysed reaction is 4-CDP-2-C-methyl-D-erythritol + ATP = 4-CDP-2-C-methyl-D-erythritol 2-phosphate + ADP + H(+). Its pathway is isoprenoid biosynthesis; isopentenyl diphosphate biosynthesis via DXP pathway; isopentenyl diphosphate from 1-deoxy-D-xylulose 5-phosphate: step 3/6. Its function is as follows. Catalyzes the phosphorylation of the position 2 hydroxy group of 4-diphosphocytidyl-2C-methyl-D-erythritol. The chain is 4-diphosphocytidyl-2-C-methyl-D-erythritol kinase from Listeria innocua serovar 6a (strain ATCC BAA-680 / CLIP 11262).